The following is a 129-amino-acid chain: DNA-directed RNA polymerase subunit omega (129 aa).

Positions 77 to 98 (VDEPESEVVPALSSAPQNPEAI) are disordered.

The protein belongs to the RNA polymerase subunit omega family. As to quaternary structure, the RNAP catalytic core consists of 2 alpha, 1 beta, 1 beta' and 1 omega subunit. When a sigma factor is associated with the core the holoenzyme is formed, which can initiate transcription.

The enzyme catalyses RNA(n) + a ribonucleoside 5'-triphosphate = RNA(n+1) + diphosphate. Promotes RNA polymerase assembly. Latches the N- and C-terminal regions of the beta' subunit thereby facilitating its interaction with the beta and alpha subunits. The polypeptide is DNA-directed RNA polymerase subunit omega (Methylocella silvestris (strain DSM 15510 / CIP 108128 / LMG 27833 / NCIMB 13906 / BL2)).